Consider the following 1001-residue polypeptide: MGSPEGEEAVVATAAVVEDGLRGNGDGGGGGVGEVVGVGRSIDMEWRKAEEAAIRRYEAANWLRRVVGVVCGKDLAEEPSEEEFRLGLRNGIVLCNALNKVQPGSVPKVVEAPSDSADGAALCAYQYFENVRNFLMGLQDLGLPTFEASDLEKGGKGVRVVDCVLSLRSFSESKQVGRSAPLKYGGILKPSMSGKHFIRKNSEPFVKTMVRSYSAELLRDGVSLEQSLGLDFSLEHVERTTPDSIRMLVQTMLSDKKPEEIPSLVESLLSRVIHEFERRTANQNESVKHALDPNDDKLLSRADTPPEMESTCTCSTGNMDEEDHTSVSMKEEVSTAVLVNGENVVEHIQAKQTDKYFDQQQKHIKDLKSNLATMKSGMEHIKLQYSEDLDKLGKHVHTLSHAASGYHKVLEENRKLYNQIQDLRGNIRVYCRVRPFLPGKVSSSSSVAGLEDRTITVMTPSKHGKDARKSFTFNRVFGPLATQEQVFADMQPLIRSVLDGYNVCIFAYGQTGSGKTFTMSGPKVLTEEGLGVNYRALNDLFNIQAQRKDTFCYEISVQMIEIYNEQVRDLLQNETVDIKNSSQKGIAVPDANIVPVTSTSDVIDLMNLGQKNRAVCSTAMNDRSSRSHSCLTVHVQGRDLTSRTVLRGCMHLVDLAGSERVDKSEVVGDRLKEAQHINKSLAALGDVIASLAQKNAHVPYRNSKLTQLLQDSLGGQAKTLMFVHIAPEPDAIGESISTLKFAERVATVELGAAKSNKEGGEVKELKEQIACLKAALAKKDGETESIRSTQSSPDIYRMRMGSAPPAFRNPMEEVGNLETRSNGTPRQKKRNFELPDVENDTSSWLDTSSQKEAALGEWVNNSQFGSSNSLLELGPDATQDVVFYQRNSPEPQWSWAGSVATEDSDDFEVTTSCSSEQDMVRPTSAPKAPGSANGSASIARKAQPKGAKSTDIRSTNPAKRAAPLQKKINGPPSASTKNGKQLSLSAADGKRAPNGKVSAKK.

The region spanning 53-172 is the Calponin-homology (CH) domain; it reads AIRRYEAANW…CVLSLRSFSE (120 aa). Over residues 284–300 the composition is skewed to basic and acidic residues; it reads NESVKHALDPNDDKLLS. The segment at 284–322 is disordered; the sequence is NESVKHALDPNDDKLLSRADTPPEMESTCTCSTGNMDEE. The Kinesin motor domain maps to 426–748; that stretch reads NIRVYCRVRP…LKFAERVATV (323 aa). ATP is bound at residue 509–516; that stretch reads GQTGSGKT. Positions 756–784 form a coiled coil; the sequence is NKEGGEVKELKEQIACLKAALAKKDGETE. Disordered regions lie at residues 804-830 and 890-1001; these read PPAF…QKKR and EPQW…SAKK. Polar residues predominate over residues 972 to 984; the sequence is PSASTKNGKQLSL.

It belongs to the TRAFAC class myosin-kinesin ATPase superfamily. Kinesin family. KIN-14 subfamily.

This chain is Kinesin-like protein KIN-14P, found in Oryza sativa subsp. japonica (Rice).